The sequence spans 465 residues: Indoleacetamide hydrolase (465 aa).

A disordered region spans residues 1–40; that stretch reads MVRGRHRSRDPQRRDLRGRDRRSASRTDARRQSAAERGCR. A compositionally biased stretch (basic and acidic residues) spans 9–39; that stretch reads RDPQRRDLRGRDRRSASRTDARRQSAAERGC. Serine 149 acts as the Charge relay system in catalysis. The active-site Acyl-ester intermediate is serine 173.

Belongs to the amidase family.

It participates in plant hormone metabolism; auxin biosynthesis. Hydrolyzes indole-3-acetamide (IAM) into indole-3-acetic acid (IAA). The chain is Indoleacetamide hydrolase (bam) from Bradyrhizobium japonicum.